The sequence spans 405 residues: MTSVMSHEFQLATAETWPNPWPMYRALRDHDPVHHVVPPQRPEYDYYVLSRHADVWSAARDHQTFSSAQGLTVNYGELEMIGLHDTPPMVMQDPPVHTEFRKLVSRGFTPRQVETVEPTVRKFVVERLEKLRANGGGDIVTELFKPLPSMVVAHYLGVPEEDWTQFDGWTQAIVAANAVDGATTGALDAVGSMMAYFTGLIERRRTEPADDAISHLVAAGVGADGDTAGTLSILAFTFTMVTGGNDTVTGMLGGSMPLLHRRPDQRRLLLDDPEGIPDAVEELLRLTSPVQGLARTTTRDVTIGDTTIPAGRRVLLLYGSANRDERQYGPDAAELDVTRCPRNILTFSHGAHHCLGAAAARMQCRVALTELLARCPDFEVAESRIVWSGGSYVRRPLSVPFRVTS.

Positions 93 and 97 each coordinate substrate. Residues Arg-101, Gly-243, Arg-295, Tyr-318, Ser-348, His-352, and Cys-354 each coordinate heme.

Belongs to the cytochrome P450 family. As to quaternary structure, homodimer. It depends on heme as a cofactor.

The chain is Cytochrome P450 130 (cyp130) from Mycobacterium tuberculosis (strain CDC 1551 / Oshkosh).